The following is a 502-amino-acid chain: L-arabinose isomerase (502 aa).

4 residues coordinate Mn(2+): E306, E333, H350, and H449.

Belongs to the arabinose isomerase family. Mn(2+) is required as a cofactor.

The catalysed reaction is beta-L-arabinopyranose = L-ribulose. It participates in carbohydrate degradation; L-arabinose degradation via L-ribulose; D-xylulose 5-phosphate from L-arabinose (bacterial route): step 1/3. In terms of biological role, catalyzes the conversion of L-arabinose to L-ribulose. In Flavobacterium johnsoniae (strain ATCC 17061 / DSM 2064 / JCM 8514 / BCRC 14874 / CCUG 350202 / NBRC 14942 / NCIMB 11054 / UW101) (Cytophaga johnsonae), this protein is L-arabinose isomerase.